A 465-amino-acid polypeptide reads, in one-letter code: E3 ubiquitin-protein ligase TRIM38 (465 aa).

The segment at Cys-16–Arg-63 adopts an RING-type zinc-finger fold. Residue Ser-70 is modified to Phosphoserine. The B box-type zinc finger occupies Asp-88–Val-129. The Zn(2+) site is built by Cys-93, His-96, Cys-115, and His-121. The B30.2/SPRY domain maps to Cys-274–Asp-465.

As to quaternary structure, interacts (via B30.2/SPRY domain) with TAB2 and TAB3. Ubiquitous.

The protein resides in the cytoplasm. The enzyme catalyses S-ubiquitinyl-[E2 ubiquitin-conjugating enzyme]-L-cysteine + [acceptor protein]-L-lysine = [E2 ubiquitin-conjugating enzyme]-L-cysteine + N(6)-ubiquitinyl-[acceptor protein]-L-lysine.. It functions in the pathway protein modification; protein ubiquitination. It participates in protein modification; protein sumoylation. In terms of biological role, E3 ubiquitin-protein and E3 SUMO-protein ligase that acts as a regulator of innate immunity. Acts as a negative regulator of type I interferon IFN-beta production by catalyzing 'Lys-48'-linked polyubiquitination of AZI2/NAP1, leading to its degradation. Mediates 'Lys-48'-linked polyubiquitination and proteasomal degradation of the critical TLR adapter TICAM1, inhibiting TLR3-mediated type I interferon signaling. Acts as positive regulator of the cGAS-STING pathway by acting as a E3 SUMO-protein ligase: mediates sumoylation of CGAS and STING, preventing their degradation and thereby activating the innate immune response to DNA virus. Also acts as a negative regulator of NF-kappa-B signaling independently of its E3 protein ligase activity by promoting lysosome-dependent degradation of TAB2 and TAB3 adapters. The polypeptide is E3 ubiquitin-protein ligase TRIM38 (Homo sapiens (Human)).